The chain runs to 338 residues: Ketol-acid reductoisomerase (NADP(+)) (338 aa).

Residues 1–181 (MKVYYDSDAD…GGGRAGIIET (181 aa)) form the KARI N-terminal Rossmann domain. NADP(+) is bound by residues 24-27 (YGSQ), Arg-47, Ser-50, Ser-52, and 82-85 (DEHQ). His-107 is a catalytic residue. An NADP(+)-binding site is contributed by Gly-133. One can recognise a KARI C-terminal knotted domain in the interval 182–327 (SFKEETETDL…AKLRAMMPWI (146 aa)). Mg(2+)-binding residues include Asp-190, Glu-194, Glu-226, and Glu-230. A substrate-binding site is contributed by Ser-251.

The protein belongs to the ketol-acid reductoisomerase family. Mg(2+) serves as cofactor.

It carries out the reaction (2R)-2,3-dihydroxy-3-methylbutanoate + NADP(+) = (2S)-2-acetolactate + NADPH + H(+). The enzyme catalyses (2R,3R)-2,3-dihydroxy-3-methylpentanoate + NADP(+) = (S)-2-ethyl-2-hydroxy-3-oxobutanoate + NADPH + H(+). It functions in the pathway amino-acid biosynthesis; L-isoleucine biosynthesis; L-isoleucine from 2-oxobutanoate: step 2/4. The protein operates within amino-acid biosynthesis; L-valine biosynthesis; L-valine from pyruvate: step 2/4. Its function is as follows. Involved in the biosynthesis of branched-chain amino acids (BCAA). Catalyzes an alkyl-migration followed by a ketol-acid reduction of (S)-2-acetolactate (S2AL) to yield (R)-2,3-dihydroxy-isovalerate. In the isomerase reaction, S2AL is rearranged via a Mg-dependent methyl migration to produce 3-hydroxy-3-methyl-2-ketobutyrate (HMKB). In the reductase reaction, this 2-ketoacid undergoes a metal-dependent reduction by NADPH to yield (R)-2,3-dihydroxy-isovalerate. This Magnetococcus marinus (strain ATCC BAA-1437 / JCM 17883 / MC-1) protein is Ketol-acid reductoisomerase (NADP(+)).